We begin with the raw amino-acid sequence, 299 residues long: Very long chain fatty acid elongase 5 (299 aa).

Residue Met1 is modified to N-acetylmethionine. 6 consecutive transmembrane segments (helical) span residues 26–46 (WFLL…LLIV), 64–84 (ILVV…CELV), 112–132 (VLRW…FFIL), 150–170 (MLNI…YFGA), 205–225 (GQLL…IWPC), and 226–246 (TFPL…IALF). Residues 275-299 (AAVNGHTNSFSPLENNVKPRKLRKD) form a disordered region. The span at 279–288 (GHTNSFSPLE) shows a compositional bias: polar residues. A Phosphoserine modification is found at Ser285.

This sequence belongs to the ELO family. ELOVL5 subfamily. Interacts with TECR.

The protein localises to the endoplasmic reticulum membrane. The protein resides in the cell projection. It localises to the dendrite. The enzyme catalyses a very-long-chain acyl-CoA + malonyl-CoA + H(+) = a very-long-chain 3-oxoacyl-CoA + CO2 + CoA. It catalyses the reaction (6Z,9Z,12Z)-octadecatrienoyl-CoA + malonyl-CoA + H(+) = (8Z,11Z,14Z)-3-oxoeicosatrienoyl-CoA + CO2 + CoA. It carries out the reaction (9Z,12Z,15Z)-octadecatrienoyl-CoA + malonyl-CoA + H(+) = (11Z,14Z,17Z)-3-oxoeicosatrienoyl-CoA + CO2 + CoA. The catalysed reaction is (9Z)-hexadecenoyl-CoA + malonyl-CoA + H(+) = 3-oxo-(11Z)-octadecenoyl-CoA + CO2 + CoA. The enzyme catalyses (9Z)-octadecenoyl-CoA + malonyl-CoA + H(+) = 3-oxo-(11Z)-eicosenoyl-CoA + CO2 + CoA. It catalyses the reaction (11Z)-octadecenoyl-CoA + malonyl-CoA + H(+) = 3-oxo-(13Z)-eicosenoyl-CoA + CO2 + CoA. It carries out the reaction (9Z,12Z)-octadecadienoyl-CoA + malonyl-CoA + H(+) = (11Z,14Z)-3-oxoicosa-11,14-dienoyl-CoA + CO2 + CoA. The catalysed reaction is (6Z,9Z,12Z,15Z)-octadecatetraenoyl-CoA + malonyl-CoA + H(+) = (8Z,11Z,14Z,17Z)-3-oxoicosatetraenoyl-CoA + CO2 + CoA. The enzyme catalyses (5Z,8Z,11Z,14Z)-eicosatetraenoyl-CoA + malonyl-CoA + H(+) = (7Z,10Z,13Z,16Z)-3-oxodocosatetraenoyl-CoA + CO2 + CoA. It catalyses the reaction (5Z,8Z,11Z,14Z,17Z)-eicosapentaenoyl-CoA + malonyl-CoA + H(+) = 3-oxo-(7Z,10Z,13Z,16Z,19Z)-docosapentaenoyl-CoA + CO2 + CoA. Its pathway is lipid metabolism; polyunsaturated fatty acid biosynthesis. Functionally, catalyzes the first and rate-limiting reaction of the four reactions that constitute the long-chain fatty acids elongation cycle. This endoplasmic reticulum-bound enzymatic process allows the addition of 2 carbons to the chain of long- and very long-chain fatty acids (VLCFAs) per cycle. Condensing enzyme that acts specifically toward polyunsaturated acyl-CoA with the higher activity toward C18:3(n-6) acyl-CoA. May participate in the production of monounsaturated and of polyunsaturated VLCFAs of different chain lengths that are involved in multiple biological processes as precursors of membrane lipids and lipid mediators. In conditions where the essential linoleic and alpha linoleic fatty acids are lacking it is also involved in the synthesis of Mead acid from oleic acid. This chain is Very long chain fatty acid elongase 5, found in Macaca fascicularis (Crab-eating macaque).